A 513-amino-acid chain; its full sequence is Plexin domain-containing protein 2 (513 aa).

A signal peptide spans 1–24; sequence MGARSESLVGVVLLFQLLADRLWC. Over 25 to 438 the chain is Extracellular; it reads AATASDSLYD…AEMKTGTLHT (414 aa). N-linked (GlcNAc...) asparagine glycosylation is found at asparagine 88, asparagine 145, asparagine 198, asparagine 206, asparagine 222, and asparagine 330. One can recognise a PSI domain in the interval 312–357; the sequence is TCLQFNSCSSCVSSMIGFNCSWCNIPQRCSSGFDRHRQDWVENGCT. A helical membrane pass occupies residues 439–459; that stretch reads GLIIGILILVLLIITAILVAV. The Cytoplasmic segment spans residues 460–513; the sequence is YMYHHPTSSASLFLIERRPSRWPAMKFRRGSGHPAYAEVEPIGEKEGFIVSEQC.

The protein belongs to the plexin family.

The protein localises to the membrane. In Xenopus laevis (African clawed frog), this protein is Plexin domain-containing protein 2 (plxdc2).